The primary structure comprises 489 residues: Envelope glycoprotein C homolog (489 aa).

An N-terminal signal peptide occupies residues 1–32 (MVSNMRVLRVLRLTGWVGIFLVLSLQQTSCAG). Residues 33-455 (LPHNVDTHHI…YYDATPSARG (423 aa)) lie on the Virion surface side of the membrane. Residues 59 to 94 (EVPNSPTTELSTTVATKTAVPTTESTSSSEAHRNSS) form a disordered region. The segment covering 60–69 (VPNSPTTELS) has biased composition (polar residues). The span at 70 to 81 (TTVATKTAVPTT) shows a compositional bias: low complexity. N-linked (GlcNAc...) asparagine; by host glycans are attached at residues asparagine 92, asparagine 112, asparagine 204, asparagine 346, and asparagine 392. An Ig-like domain is found at 250 to 348 (PASVDVLAPP…GDMISTSNAT (99 aa)). Residues 456-486 (MPMIVTITAVLGLALFLGIGIIITALCFYLP) traverse the membrane as a helical segment. The Cytoplasmic portion of the chain corresponds to 487 to 489 (GRN).

This sequence belongs to the herpesviridae glycoprotein C family.

It localises to the virion membrane. This is Envelope glycoprotein C homolog (gC) from Gallus gallus (Chicken).